We begin with the raw amino-acid sequence, 490 residues long: GTPase Der (490 aa).

EngA-type G domains are found at residues Pro3–Leu166 and Ile203–Thr376. Residues Gly9 to Ser16, Asp56 to Ile60, Asn118 to Asp121, Gly209 to Ser216, Asp256 to Val260, and Asn321 to Asp324 contribute to the GTP site. Residues Arg377–Glu461 form the KH-like domain.

The protein belongs to the TRAFAC class TrmE-Era-EngA-EngB-Septin-like GTPase superfamily. EngA (Der) GTPase family. In terms of assembly, associates with the 50S ribosomal subunit.

In terms of biological role, GTPase that plays an essential role in the late steps of ribosome biogenesis. This chain is GTPase Der, found in Escherichia coli O127:H6 (strain E2348/69 / EPEC).